A 663-amino-acid polypeptide reads, in one-letter code: UvrABC system protein B (663 aa).

Basic and acidic residues predominate over residues 1-10 (MIDKRDDKPF). The interval 1–23 (MIDKRDDKPFKLKSKYKPSGDQP) is disordered. The region spanning 31-271 (DNIEGGEKAQ…EQSIAKIQAE (241 aa)) is the Helicase ATP-binding domain. 44 to 51 (GATGTGKT) serves as a coordination point for ATP. Residues 97-120 (YYDYYQPEAYVPSSDTYIEKDSSV) carry the Beta-hairpin motif. One can recognise a Helicase C-terminal domain in the interval 435–601 (QMDDLLGEIN…TIKKDIRGLI (167 aa)). The UVR domain maps to 627–662 (KEAINALQKQMQEAAELLDFELAAQMRDLILELKLM).

This sequence belongs to the UvrB family. Forms a heterotetramer with UvrA during the search for lesions. Interacts with UvrC in an incision complex.

It is found in the cytoplasm. Its function is as follows. The UvrABC repair system catalyzes the recognition and processing of DNA lesions. A damage recognition complex composed of 2 UvrA and 2 UvrB subunits scans DNA for abnormalities. Upon binding of the UvrA(2)B(2) complex to a putative damaged site, the DNA wraps around one UvrB monomer. DNA wrap is dependent on ATP binding by UvrB and probably causes local melting of the DNA helix, facilitating insertion of UvrB beta-hairpin between the DNA strands. Then UvrB probes one DNA strand for the presence of a lesion. If a lesion is found the UvrA subunits dissociate and the UvrB-DNA preincision complex is formed. This complex is subsequently bound by UvrC and the second UvrB is released. If no lesion is found, the DNA wraps around the other UvrB subunit that will check the other stand for damage. The protein is UvrABC system protein B of Streptococcus pyogenes serotype M4 (strain MGAS10750).